The primary structure comprises 432 residues: Glutamate-1-semialdehyde 2,1-aminomutase (432 aa).

K265 is subject to N6-(pyridoxal phosphate)lysine.

This sequence belongs to the class-III pyridoxal-phosphate-dependent aminotransferase family. HemL subfamily. As to quaternary structure, homodimer. It depends on pyridoxal 5'-phosphate as a cofactor.

Its subcellular location is the cytoplasm. The catalysed reaction is (S)-4-amino-5-oxopentanoate = 5-aminolevulinate. The protein operates within porphyrin-containing compound metabolism; protoporphyrin-IX biosynthesis; 5-aminolevulinate from L-glutamyl-tRNA(Glu): step 2/2. The polypeptide is Glutamate-1-semialdehyde 2,1-aminomutase (Vibrio cholerae serotype O1 (strain ATCC 39541 / Classical Ogawa 395 / O395)).